Consider the following 406-residue polypeptide: Cysteine desulfurase (406 aa).

An N6-(pyridoxal phosphate)lysine modification is found at lysine 226. Cysteine 364 acts as the Cysteine persulfide intermediate in catalysis.

The protein belongs to the class-V pyridoxal-phosphate-dependent aminotransferase family. Csd subfamily. As to quaternary structure, homodimer. Interacts with SufE and the SufBCD complex composed of SufB, SufC and SufD. The interaction with SufE is required to mediate the direct transfer of the sulfur atom from the S-sulfanylcysteine. It depends on pyridoxal 5'-phosphate as a cofactor.

The protein resides in the cytoplasm. It carries out the reaction (sulfur carrier)-H + L-cysteine = (sulfur carrier)-SH + L-alanine. It catalyses the reaction L-selenocysteine + AH2 = hydrogenselenide + L-alanine + A + H(+). It participates in cofactor biosynthesis; iron-sulfur cluster biosynthesis. Cysteine desulfurases mobilize the sulfur from L-cysteine to yield L-alanine, an essential step in sulfur metabolism for biosynthesis of a variety of sulfur-containing biomolecules. Component of the suf operon, which is activated and required under specific conditions such as oxidative stress and iron limitation. Acts as a potent selenocysteine lyase in vitro, that mobilizes selenium from L-selenocysteine. Selenocysteine lyase activity is however unsure in vivo. The protein is Cysteine desulfurase of Salmonella gallinarum (strain 287/91 / NCTC 13346).